We begin with the raw amino-acid sequence, 174 residues long: MSASETDRWAWLLVLSFVFGCNLLRILLPSLSSFISRVLQKDAEQESQMRAEIQGMKQELSTVNMMDEFARYARLERKINKMTDKLKTHVKARTAQLAKIKWFISVAFYILQAALMISLIWKYYSVPVAVVPSKWITPLDRLVAFPTRVAGGIGITCWILVCNKVVAIVLHPFS.

The Lumenal segment spans residues 1 to 8 (MSASETDR). The chain crosses the membrane as a helical span at residues 9 to 29 (WAWLLVLSFVFGCNLLRILLP). Residues 30–99 (SLSSFISRVL…VKARTAQLAK (70 aa)) are Cytoplasmic-facing. The stretch at 39–94 (LQKDAEQESQMRAEIQGMKQELSTVNMMDEFARYARLERKINKMTDKLKTHVKART) forms a coiled coil. The tract at residues 39-97 (LQKDAEQESQMRAEIQGMKQELSTVNMMDEFARYARLERKINKMTDKLKTHVKARTAQL) is interaction with GET3/TRC40. Residues 100–120 (IKWFISVAFYILQAALMISLI) form a helical membrane-spanning segment. The Lumenal segment spans residues 121–148 (WKYYSVPVAVVPSKWITPLDRLVAFPTR). The helical transmembrane segment at 149–169 (VAGGIGITCWILVCNKVVAIV) threads the bilayer. At 170–174 (LHPFS) the chain is on the cytoplasmic side.

This sequence belongs to the WRB/GET1 family. In terms of assembly, component of the Golgi to ER traffic (GET) complex, which is composed of GET1, CAMLG/GET2 and GET3. Within the complex, GET1 and CAMLG form a heterotetramer which is stabilized by phosphatidylinositol binding and which binds to the GET3 homodimer. Interacts with CAMLG/GET2 (via C-terminus). GET3 shows a higher affinity for CAMLG than for GET1.

It is found in the endoplasmic reticulum membrane. Required for the post-translational delivery of tail-anchored (TA) proteins to the endoplasmic reticulum. Together with CAMLG/GET2, acts as a membrane receptor for soluble GET3/TRC40, which recognizes and selectively binds the transmembrane domain of TA proteins in the cytosol. Required to ensure correct topology and ER insertion of CAMLG. This chain is Guided entry of tail-anchored proteins factor 1, found in Mus musculus (Mouse).